We begin with the raw amino-acid sequence, 322 residues long: tRNA dimethylallyltransferase (322 aa).

An ATP-binding site is contributed by 18-25; the sequence is GPTASGKS. 20–25 lines the substrate pocket; that stretch reads TASGKS. Interaction with substrate tRNA stretches follow at residues 43-46 and 167-171; these read DSRQ and QRLVR.

This sequence belongs to the IPP transferase family. As to quaternary structure, monomer. Mg(2+) is required as a cofactor.

It carries out the reaction adenosine(37) in tRNA + dimethylallyl diphosphate = N(6)-dimethylallyladenosine(37) in tRNA + diphosphate. Catalyzes the transfer of a dimethylallyl group onto the adenine at position 37 in tRNAs that read codons beginning with uridine, leading to the formation of N6-(dimethylallyl)adenosine (i(6)A). This chain is tRNA dimethylallyltransferase, found in Chlorobium phaeobacteroides (strain BS1).